A 174-amino-acid chain; its full sequence is Small ribosomal subunit protein uS5 (174 aa).

The S5 DRBM domain occupies 20-83 (IEDQLVAINR…EAGKKRMIKV (64 aa)).

The protein belongs to the universal ribosomal protein uS5 family. In terms of assembly, part of the 30S ribosomal subunit. Contacts proteins S4 and S8.

With S4 and S12 plays an important role in translational accuracy. Its function is as follows. Located at the back of the 30S subunit body where it stabilizes the conformation of the head with respect to the body. This is Small ribosomal subunit protein uS5 from Lactobacillus gasseri (strain ATCC 33323 / DSM 20243 / BCRC 14619 / CIP 102991 / JCM 1131 / KCTC 3163 / NCIMB 11718 / NCTC 13722 / AM63).